An 84-amino-acid polypeptide reads, in one-letter code: Putative membrane protein insertion efficiency factor (84 aa).

A disordered region spans residues 63-84 (GEDPVPNHFTLRRNKKEKPSKS).

Belongs to the UPF0161 family.

Its subcellular location is the cell membrane. Could be involved in insertion of integral membrane proteins into the membrane. The polypeptide is Putative membrane protein insertion efficiency factor (Streptococcus mutans serotype c (strain ATCC 700610 / UA159)).